We begin with the raw amino-acid sequence, 217 residues long: Peptide methionine sulfoxide reductase MsrA (217 aa).

The interval 16-39 (EALKGGRHPVLESPQPHTVLGTPI) is disordered. Residue C56 is part of the active site.

The protein belongs to the MsrA Met sulfoxide reductase family.

It carries out the reaction L-methionyl-[protein] + [thioredoxin]-disulfide + H2O = L-methionyl-(S)-S-oxide-[protein] + [thioredoxin]-dithiol. The catalysed reaction is [thioredoxin]-disulfide + L-methionine + H2O = L-methionine (S)-S-oxide + [thioredoxin]-dithiol. In terms of biological role, has an important function as a repair enzyme for proteins that have been inactivated by oxidation. Catalyzes the reversible oxidation-reduction of methionine sulfoxide in proteins to methionine. The polypeptide is Peptide methionine sulfoxide reductase MsrA (Corynebacterium efficiens (strain DSM 44549 / YS-314 / AJ 12310 / JCM 11189 / NBRC 100395)).